We begin with the raw amino-acid sequence, 375 residues long: Lipid-A-disaccharide synthase (375 aa).

It belongs to the LpxB family.

It carries out the reaction a lipid X + a UDP-2-N,3-O-bis[(3R)-3-hydroxyacyl]-alpha-D-glucosamine = a lipid A disaccharide + UDP + H(+). It functions in the pathway bacterial outer membrane biogenesis; LPS lipid A biosynthesis. In terms of biological role, condensation of UDP-2,3-diacylglucosamine and 2,3-diacylglucosamine-1-phosphate to form lipid A disaccharide, a precursor of lipid A, a phosphorylated glycolipid that anchors the lipopolysaccharide to the outer membrane of the cell. This is Lipid-A-disaccharide synthase from Pseudomonas putida (strain GB-1).